A 495-amino-acid chain; its full sequence is uncharacterized protein (495 aa).

The N-terminal stretch at 1–17 is a signal peptide; the sequence is MRTLSLLILFLSTFLFA.

This is an uncharacterized protein from Aquifex aeolicus (strain VF5).